The following is a 564-amino-acid chain: NAD-dependent malic enzyme (564 aa).

The active-site Proton donor is Tyr102. Arg155 serves as a coordination point for NAD(+). Catalysis depends on Lys173, which acts as the Proton acceptor. Glu244, Asp245, and Asp268 together coordinate a divalent metal cation. Positions 268 and 417 each coordinate NAD(+).

It belongs to the malic enzymes family. Homotetramer. The cofactor is Mg(2+). Mn(2+) serves as cofactor.

It catalyses the reaction (S)-malate + NAD(+) = pyruvate + CO2 + NADH. The catalysed reaction is oxaloacetate + H(+) = pyruvate + CO2. The polypeptide is NAD-dependent malic enzyme (Pseudomonas aeruginosa (strain UCBPP-PA14)).